The primary structure comprises 399 residues: 1-deoxy-D-xylulose 5-phosphate reductoisomerase (399 aa).

NADPH contacts are provided by threonine 13, glycine 14, serine 15, isoleucine 16, and asparagine 127. Lysine 128 is a binding site for 1-deoxy-D-xylulose 5-phosphate. Residue glutamate 129 participates in NADPH binding. Residue aspartate 153 coordinates Mn(2+). The 1-deoxy-D-xylulose 5-phosphate site is built by serine 154, glutamate 155, serine 187, and histidine 210. Residue glutamate 155 participates in Mn(2+) binding. NADPH is bound at residue glycine 216. 1-deoxy-D-xylulose 5-phosphate-binding residues include serine 223, asparagine 228, lysine 229, and glutamate 232. Residue glutamate 232 coordinates Mn(2+).

It belongs to the DXR family. Requires Mg(2+) as cofactor. It depends on Mn(2+) as a cofactor.

The enzyme catalyses 2-C-methyl-D-erythritol 4-phosphate + NADP(+) = 1-deoxy-D-xylulose 5-phosphate + NADPH + H(+). Its pathway is isoprenoid biosynthesis; isopentenyl diphosphate biosynthesis via DXP pathway; isopentenyl diphosphate from 1-deoxy-D-xylulose 5-phosphate: step 1/6. Functionally, catalyzes the NADPH-dependent rearrangement and reduction of 1-deoxy-D-xylulose-5-phosphate (DXP) to 2-C-methyl-D-erythritol 4-phosphate (MEP). The protein is 1-deoxy-D-xylulose 5-phosphate reductoisomerase of Bordetella avium (strain 197N).